Consider the following 506-residue polypeptide: Tabersonine 16-hydroxylase 1 (506 aa).

A helical transmembrane segment spans residues 1–21 (MEFYYFLYLAFLLFCFILSKT). Heme is bound at residue cysteine 447.

Belongs to the cytochrome P450 family. The cofactor is heme. As to expression, predominantly expressed in young leaves of mature plants. Low expression in roots and flowers, but not detected in stems and old leaves. Found predominantly in leaf epidermis. Barely detected in roots, internodes, young and mature leaves, and flower buds, but relatively abundant in fully developed flowers. Not detected in leaf epidermal cells.

The protein resides in the endoplasmic reticulum membrane. The catalysed reaction is (-)-tabersonine + reduced [NADPH--hemoprotein reductase] + O2 = 16-hydroxytabersonine + oxidized [NADPH--hemoprotein reductase] + H2O + H(+). The protein operates within alkaloid biosynthesis; vindoline biosynthesis. Involved in the flower biosynthesis of vindoline, a precursor of vinblastine and vincristine. Hydroxylates specifically tabersonine, 2,3-dihydrotabersonine and 2,3-dihydro-3-hydroxytabersonine, but has no activity with naringenin, tryptamine, secologanin, strictosidine, ajmalicine, vindoline and catharanthine. In Catharanthus roseus (Madagascar periwinkle), this protein is Tabersonine 16-hydroxylase 1.